The sequence spans 389 residues: Chalcone synthase 1A (389 aa).

The active site involves Cys-164.

The protein belongs to the thiolase-like superfamily. Chalcone/stilbene synthases family.

The enzyme catalyses (E)-4-coumaroyl-CoA + 3 malonyl-CoA + 3 H(+) = 2',4,4',6'-tetrahydroxychalcone + 3 CO2 + 4 CoA. Its pathway is secondary metabolite biosynthesis; flavonoid biosynthesis. In terms of biological role, the primary product of this enzyme is 4,2',4',6'-tetrahydroxychalcone (also termed naringenin-chalcone or chalcone) which can under specific conditions spontaneously isomerize into naringenin. This Solanum tuberosum (Potato) protein is Chalcone synthase 1A (CHS1A).